The chain runs to 507 residues: 3-[(3aS,4S,7aS)-7a-methyl-1,5-dioxo-octahydro-1H-inden-4-yl]propanoyl:CoA ligase (507 aa).

ATP-binding positions include 177–185, Asp391, Arg406, and Lys497; that span reads TSGTTGRSK.

Belongs to the ATP-dependent AMP-binding enzyme family.

It catalyses the reaction 3-[(3aS,4S,7aS)-7a-methyl-1,5-dioxo-octahydro-1H-inden-4-yl]propanoate + ATP + CoA = 3-[(3aS,4S,7aS)-7a-methyl-1,5-dioxo-octahydro-1H-inden-4-yl]propanoyl-CoA + AMP + diphosphate. The enzyme catalyses 5-hydroxy-3-[(3aS,4S,5R,7aS)-7a-methyl-1,5-dioxo-octahydro-1H-inden-4-yl]propanoate + ATP + CoA = 3-[(3aS,4S,5R,7aS)-5-hydroxy-7a-methyl-1-oxo-octahydro-1H-inden-4-yl]propanoyl-CoA + AMP + diphosphate. Involved in the catabolism of the rings C and D of cholesterol. Catalyzes the ATP-dependent CoA thioesterification of 3aalpha-H-4alpha(3'-propanoate)-7abeta-methylhexahydro-1,5-indanedione (HIP) to yield HIP-CoA. It can also use the hydroxylated analogs of HIP, 5alpha-OH HIP and 1beta-OH HIP. It requires that the side chain at C17 is completely removed. The polypeptide is 3-[(3aS,4S,7aS)-7a-methyl-1,5-dioxo-octahydro-1H-inden-4-yl]propanoyl:CoA ligase (Mycobacterium tuberculosis (strain ATCC 25618 / H37Rv)).